Reading from the N-terminus, the 296-residue chain is Probable lipid kinase YegS-like (296 aa).

The 130-residue stretch at 1 to 130 (MPHTLLILNG…IDLAQVNGEH (130 aa)) folds into the DAGKc domain. ATP is bound by residues T37, 63-69 (GDGTINE), and T92. Residues L212, D215, and L217 each contribute to the Mg(2+) site. E268 serves as the catalytic Proton acceptor.

Belongs to the diacylglycerol/lipid kinase family. YegS lipid kinase subfamily. Requires Mg(2+) as cofactor. Ca(2+) is required as a cofactor.

It localises to the cytoplasm. In terms of biological role, probably phosphorylates lipids; the in vivo substrate is unknown. The sequence is that of Probable lipid kinase YegS-like from Yersinia pestis bv. Antiqua (strain Angola).